The following is a 516-amino-acid chain: Probable rhamnogalacturonase B (516 aa).

The first 21 residues, 1 to 21, serve as a signal peptide directing secretion; sequence MRLHAFTLLSLLGLVPSFAAA. A disulfide bond links Cys-42 and Cys-68. N-linked (GlcNAc...) asparagine glycosylation occurs at Asn-145. The active-site Proton donor is the Asp-219. A disulfide bridge connects residues Cys-221 and Cys-238. Asn-239 carries an N-linked (GlcNAc...) asparagine glycan. His-294 is a catalytic residue. Asn-321 carries an N-linked (GlcNAc...) asparagine glycan. 2 cysteine pairs are disulfide-bonded: Cys-344/Cys-350 and Cys-372/Cys-381. Residues 462–516 form a disordered region; sequence ETPAAASRSEQVVQGASQETSQPAPESAGPVRSVPTGGNRPSRHRHGHHHFWIAA. Residues 469–485 show a composition bias toward polar residues; sequence RSEQVVQGASQETSQPA. Residues 502-516 are compositionally biased toward basic residues; the sequence is PSRHRHGHHHFWIAA.

Belongs to the glycosyl hydrolase 28 family.

It is found in the secreted. The enzyme catalyses Endohydrolysis of alpha-D-GalA-(1-&gt;2)-alpha-L-Rha glycosidic bond in the rhamnogalacturonan I backbone with initial inversion of anomeric configuration releasing oligosaccharides with beta-D-GalA at the reducing end.. Functionally, pectinolytic enzymes consist of four classes of enzymes: pectine lyase, polygalacturonase, pectin methylesterase and rhamnogalacturonase. Hydrolyzes alpha-D-galacturonopyranosyl-(1,2)-alpha-L-rhamnopyranosyl linkages in the backbone of the hairy regions of pectins. The protein is Probable rhamnogalacturonase B (rhgB) of Neosartorya fischeri (strain ATCC 1020 / DSM 3700 / CBS 544.65 / FGSC A1164 / JCM 1740 / NRRL 181 / WB 181) (Aspergillus fischerianus).